A 504-amino-acid polypeptide reads, in one-letter code: Ammonium transporter 1 member 4 (504 aa).

12 helical membrane passes run Leu12–Ile32, Leu55–Gly75, Val90–Gly110, Tyr136–Ala156, Phe161–His181, Phe207–Ile227, Leu251–Phe271, Ala292–Gly314, Ile318–Ile338, Val344–Cys364, Leu377–Phe397, and Val430–Ile450. Thr471 carries the post-translational modification Phosphothreonine.

This sequence belongs to the ammonia transporter channel (TC 1.A.11.2) family. In terms of tissue distribution, specifically expressed in pollen grains and tubes.

The protein localises to the cell membrane. Its function is as follows. High affinity ammonium transporter in the plasma membrane. This chain is Ammonium transporter 1 member 4 (AMT1-4), found in Arabidopsis thaliana (Mouse-ear cress).